Consider the following 130-residue polypeptide: Small ribosomal subunit protein uS9 (130 aa).

This sequence belongs to the universal ribosomal protein uS9 family.

In Edwardsiella ictaluri (strain 93-146), this protein is Small ribosomal subunit protein uS9.